The sequence spans 602 residues: Toxin YwqJ (602 aa).

One can recognise an LXG domain in the interval 1–235 (MSKVFESKSL…TTYIDAKTQQ (235 aa)). Coiled coils occupy residues 6-41 (ESKS…VADL) and 227-251 (TYID…EANK).

This sequence in the N-terminal section; belongs to the LXG family. As to quaternary structure, probably interacts with cognate immunity protein YwqK but not with non-cognate immunity proteins. The interaction inhibits the toxic activity of YwqJ.

It localises to the secreted. Toxic component of one of 6 LXG toxin-immunity modules in this strain. They promote kin selection, mediate competition in biofilms, and drive spatial segregation of different strains, indicating that LXG toxins may help avoid warfare between strains in biofilms. Mediates intercellular competition during biofilm formation; disruption of the operon disadvantages the bacteria, but overexpression of the cognate immunity protein restores growth in competition with wild-type. Overexpression alone in situ causes growth arrest but not cell lysis; no effect is seen on DNA or rRNA. Co-overexpression with cognate immunity protein YwqK does not cause growth arrest. The toxic effect is dependent on the epsA and tapA operons which are required for biofilm formation. Its toxic effects are probably neutralized by its cognate immunity protein YwqK, but not by immunity proteins specific to other toxins with the LXG domain. May have deaminase activity. In Bacillus subtilis (strain 168), this protein is Toxin YwqJ (ywqJ).